The primary structure comprises 615 residues: DNA mismatch repair protein MutL (615 aa).

Residues 363–397 (FAEPAVREPVAPRYTPAPASGSRPAAPWPNAQPGY) are disordered. The span at 378 to 391 (PAPASGSRPAAPWP) shows a compositional bias: low complexity.

The protein belongs to the DNA mismatch repair MutL/HexB family.

In terms of biological role, this protein is involved in the repair of mismatches in DNA. It is required for dam-dependent methyl-directed DNA mismatch repair. May act as a 'molecular matchmaker', a protein that promotes the formation of a stable complex between two or more DNA-binding proteins in an ATP-dependent manner without itself being part of a final effector complex. In Escherichia coli O157:H7 (strain EC4115 / EHEC), this protein is DNA mismatch repair protein MutL.